The primary structure comprises 132 residues: Aspartate 1-decarboxylase (132 aa).

Serine 25 acts as the Schiff-base intermediate with substrate; via pyruvic acid in catalysis. Residue serine 25 is modified to Pyruvic acid (Ser). Threonine 57 serves as a coordination point for substrate. The active-site Proton donor is tyrosine 58. Substrate is bound at residue 73-75 (GAA).

Belongs to the PanD family. Heterooctamer of four alpha and four beta subunits. Pyruvate serves as cofactor. Is synthesized initially as an inactive proenzyme, which is activated by self-cleavage at a specific serine bond to produce a beta-subunit with a hydroxyl group at its C-terminus and an alpha-subunit with a pyruvoyl group at its N-terminus.

It localises to the cytoplasm. The catalysed reaction is L-aspartate + H(+) = beta-alanine + CO2. It functions in the pathway cofactor biosynthesis; (R)-pantothenate biosynthesis; beta-alanine from L-aspartate: step 1/1. Its function is as follows. Catalyzes the pyruvoyl-dependent decarboxylation of aspartate to produce beta-alanine. The sequence is that of Aspartate 1-decarboxylase from Geotalea uraniireducens (strain Rf4) (Geobacter uraniireducens).